A 380-amino-acid polypeptide reads, in one-letter code: GATOR1 complex protein NPRL2 (380 aa).

The interaction with PDPK1 stretch occupies residues Met-1–Thr-133. Position 78 (Arg-78) interacts with GDP. The residue at position 78 (Arg-78) is an Asymmetric dimethylarginine. Glycyl lysine isopeptide (Lys-Gly) (interchain with G-Cter in ubiquitin) cross-links involve residues Lys-158 and Lys-357.

Belongs to the NPR2 family. Within the GATOR complex, component of the GATOR1 subcomplex, made of DEPDC5, NPRL2 and NPRL3. GATOR1 mediates the strong interaction of the GATOR complex with small GTPases Rag (RagA/RRAGA, RagB/RRAGB, RagC/RRAGC and/or RagD/RRAGD) heterodimers. GATOR1 interacts with GPR155/LYCHOS; interaction takes place in presence of cholesterol and prevents interaction between GATOR1 and KICSTOR. Interacts with PDPK1. Post-translationally, in the presence of abundant amino acids, ubiquitinated at Lys-158 and Lys-357 via 'Lys-6'-linked ubiquitination by the WDR24 component of the GATOR2 complex, thereby inhibiting the GATOR1 complex and promoting mTORC1 activation. In terms of processing, asymmetric dimethylation at Arg-78 by PRMT1 inhibits the GTPase activator activity of the GATOR1 complex and consequently inducing timely mTORC1 activation under methionine-sufficient conditions.

The protein localises to the lysosome membrane. Functionally, catalytic component of the GATOR1 complex, a multiprotein complex that functions as an inhibitor of the amino acid-sensing branch of the mTORC1 pathway. In response to amino acid depletion, the GATOR1 complex has GTPase activating protein (GAP) activity and strongly increases GTP hydrolysis by RagA/RRAGA (or RagB/RRAGB) within heterodimeric Rag complexes, thereby turning them into their inactive GDP-bound form, releasing mTORC1 from lysosomal surface and inhibiting mTORC1 signaling. In the presence of abundant amino acids, the GATOR1 complex is ubiquitinated and inhibited by GATOR2. Within the GATOR1 complex, NPRL2 constitutes the catalytic subunit that mediates the GTPase activator activity and under methionine-sufficient conditions, the GTPase activator activity is inhibited by PRMT1 through methylation and consequently inducing timely mTORC1 activation. Its function is as follows. Suppresses Src-dependent tyrosine phosphorylation and activation of PDPK1 and its downstream signaling. Down-regulates PDPK1 kinase activity by interfering with tyrosine phosphorylation at 'Tyr-9', 'Tyr-373' and 'Tyr-376' residues. May act as a tumor suppressor. Suppresses cell growth and enhances sensitivity to various anticancer drugs. In Mus musculus (Mouse), this protein is GATOR1 complex protein NPRL2.